We begin with the raw amino-acid sequence, 128 residues long: MRYAIMVTGPAYGAQQASSALQFAHALLNEGHELISVFFYREGVYNANLLTSPAGDEYDLVRAWQKLNTQHGVALNICVAAALRRGIIDDTEADRLGLPSANLQPGFTLSGLGALAEASLTCDRVVQF.

Cysteine 78 acts as the Cysteine persulfide intermediate in catalysis.

This sequence belongs to the DsrE/TusD family. In terms of assembly, heterohexamer, formed by a dimer of trimers. The hexameric TusBCD complex contains 2 copies each of TusB, TusC and TusD. The TusBCD complex interacts with TusE.

Its subcellular location is the cytoplasm. In terms of biological role, part of a sulfur-relay system required for 2-thiolation of 5-methylaminomethyl-2-thiouridine (mnm(5)s(2)U) at tRNA wobble positions. Accepts sulfur from TusA and transfers it in turn to TusE. This chain is Sulfurtransferase TusD, found in Salmonella arizonae (strain ATCC BAA-731 / CDC346-86 / RSK2980).